The following is a 442-amino-acid chain: Putative zinc metalloprotease PM1991 (442 aa).

A Zn(2+)-binding site is contributed by histidine 21. Glutamate 22 is a catalytic residue. Histidine 25 is a Zn(2+) binding site. A helical membrane pass occupies residues 97–119; that stretch reads AFVIAAGPIANFLFAILAYFTIY. Residues 198 to 286 enclose the PDZ domain; it reads DWRFDPEKES…FSFVVLTPEL (89 aa). The next 2 membrane-spanning stretches (helical) occupy residues 366-388 and 418-440; these read IGLIYYLGFMALISVNLGIMNLF and LSYRIGAAILMALMGFALFNDFL.

Belongs to the peptidase M50B family. It depends on Zn(2+) as a cofactor.

The protein localises to the cell inner membrane. This Pasteurella multocida (strain Pm70) protein is Putative zinc metalloprotease PM1991.